Reading from the N-terminus, the 148-residue chain is SsrA-binding protein (148 aa).

The tract at residues 119 to 148 (AKGKKQHDKRQSMKEADWKREKQRLIKHTR) is disordered. The span at 127–142 (KRQSMKEADWKREKQR) shows a compositional bias: basic and acidic residues.

The protein belongs to the SmpB family.

It is found in the cytoplasm. Its function is as follows. Required for rescue of stalled ribosomes mediated by trans-translation. Binds to transfer-messenger RNA (tmRNA), required for stable association of tmRNA with ribosomes. tmRNA and SmpB together mimic tRNA shape, replacing the anticodon stem-loop with SmpB. tmRNA is encoded by the ssrA gene; the 2 termini fold to resemble tRNA(Ala) and it encodes a 'tag peptide', a short internal open reading frame. During trans-translation Ala-aminoacylated tmRNA acts like a tRNA, entering the A-site of stalled ribosomes, displacing the stalled mRNA. The ribosome then switches to translate the ORF on the tmRNA; the nascent peptide is terminated with the 'tag peptide' encoded by the tmRNA and targeted for degradation. The ribosome is freed to recommence translation, which seems to be the essential function of trans-translation. The polypeptide is SsrA-binding protein (Neisseria meningitidis serogroup C (strain 053442)).